A 357-amino-acid chain; its full sequence is Adenylate isopentenyltransferase 1, chloroplastic (357 aa).

A chloroplast-targeting transit peptide spans 1–71 (MTELNFHLLP…NRKDKVVVIL (71 aa)). Residues 20-39 (TTTSPSFSSHSSSSSSLLSF) show a composition bias toward low complexity. Residues 20-58 (TTTSPSFSSHSSSSSSLLSFTKRRRKHQPLVSSIRMEQS) are disordered. 72 to 79 (GATGAGKS) contacts ATP.

Belongs to the IPP transferase family. As to expression, expressed in the vascular stele of the roots, in the xylem precursor cell files in the root tip, in leaf axils, ovules, and immature seeds.

The protein localises to the plastid. It is found in the chloroplast. The enzyme catalyses dimethylallyl diphosphate + AMP = N(6)-(dimethylallyl)adenosine 5'-phosphate + diphosphate. It catalyses the reaction dimethylallyl diphosphate + ADP = N(6)-(dimethylallyl)adenosine 5'-diphosphate + diphosphate. It carries out the reaction dimethylallyl diphosphate + ATP = N(6)-(dimethylallyl)adenosine 5'-triphosphate + diphosphate. Involved in cytokinin biosynthesis. Catalyzes the transfer of an isopentenyl group from dimethylallyl diphosphate (DMAPP) to ATP, ADP and AMP. Adenine, adenosine, isopentenylpyrophosphate and 1-hydroxy-2-methyl-2-(E)-butenyl 4-diphosphate (HMBDP) are not used as substrates. This is Adenylate isopentenyltransferase 1, chloroplastic (IPT1) from Arabidopsis thaliana (Mouse-ear cress).